The chain runs to 325 residues: Bifunctional nuclease 1 (325 aa).

Positions 117 to 252 (CVHNNPQGGH…YLAYSDGMRV (136 aa)) constitute a BFN domain. Positions 284–318 (TKEFNILSKMMQAVDEERYDEAAEWRDKLGQFRAK) constitute a UVR domain.

The protein belongs to the bifunctional nuclease family.

The protein resides in the nucleus. Bifunctional nuclease with both RNase and DNase activities. Involved in basal defense response. Participates in abscisic acid-derived callose deposition following infection by a necrotrophic pathogen. The sequence is that of Bifunctional nuclease 1 (BBD1) from Arabidopsis thaliana (Mouse-ear cress).